The chain runs to 401 residues: Methionyl-tRNA formyltransferase, mitochondrial (401 aa).

A mitochondrion-targeting transit peptide spans 1–26 (MVKMRRITPTRLLFTCRYISNNASPP). (6R)-10-formyltetrahydrofolate contacts are provided by residues 18–20 (YIS) and 66–70 (VVTRS).

The protein belongs to the Fmt family. Post-translationally, phosphorylated by GCN2 in response to nutrient deprivation. Phosphorylation mediates retention of FMT1 in the cytoplasm.

It is found in the mitochondrion. Its subcellular location is the mitochondrion matrix. The protein localises to the cytoplasm. It carries out the reaction L-methionyl-tRNA(fMet) + (6R)-10-formyltetrahydrofolate = N-formyl-L-methionyl-tRNA(fMet) + (6S)-5,6,7,8-tetrahydrofolate + H(+). Its function is as follows. Formylates methionyl-tRNA in mitochondria and the cytoplasm. Responsible for the formylation of the 8 N-terminally formylated (Nt-formylated) mitochondrial matrix proteins that are encoded by mitochondrial DNA. Nt-formylated proteins in the cytoplasm are strongly up-regulated in stationary phase or upon starvation for specific amino acids (His or Lys) and are targeted for degradation by a PSH1 E3 ubiquitin ligase-mediated fMet/N-end rule pathway. Increased Nt-formylation of cytosolic proteins appears to be important for adaptation to these stresses. Stationary phase-degraded Nt-formylated proteins include histone H3-like centromeric protein CSE4, Mediator complex subunit 3 (PGD1) and small ribosomal subunit protein uS8-A (RPS22A). In Saccharomyces cerevisiae (strain ATCC 204508 / S288c) (Baker's yeast), this protein is Methionyl-tRNA formyltransferase, mitochondrial (FMT1).